We begin with the raw amino-acid sequence, 215 residues long: Large ribosomal subunit protein uL1 (215 aa).

Belongs to the universal ribosomal protein uL1 family. In terms of assembly, part of the 50S ribosomal subunit.

In terms of biological role, binds directly to 23S rRNA. Probably involved in E site tRNA release. Functionally, protein L1 is also a translational repressor protein, it controls the translation of its operon by binding to its mRNA. The sequence is that of Large ribosomal subunit protein uL1 from Archaeoglobus fulgidus (strain ATCC 49558 / DSM 4304 / JCM 9628 / NBRC 100126 / VC-16).